A 390-amino-acid chain; its full sequence is Calcium-binding and spermatid-specific protein 1 (390 aa).

Disordered regions lie at residues 1 to 23 (MAED…TPTE), 82 to 109 (ASLK…KESI), and 146 to 225 (TIDA…TIPD). Residues 162-174 (ETQEDSSANDEDT) are compositionally biased toward acidic residues. The span at 184-193 (TDVSSSTSSD) shows a compositional bias: low complexity. Phosphoserine is present on residues serine 251 and serine 267. A Phosphothreonine; by CK2 modification is found at threonine 280. Phosphoserine is present on serine 312. Residues 330-344 (EPHVDTKNSPEKDAA) show a composition bias toward basic and acidic residues. The segment at 330–390 (EPHVDTKNSP…LKEEPDELMM (61 aa)) is disordered. Serine 346, serine 356, serine 371, and serine 375 each carry phosphoserine. Polar residues predominate over residues 346 to 364 (SVTNVTEEFPSVTSVVEQS).

As to expression, expressed in seminiferous tubules of the testis in step 10 spermatids (stage X), subsequently increasing to reach maximal levels of step 18 elongated spermatids (stage VI) (at protein level). Strongly expressed in testis. Weakly expressed in olfactory epithelium. Expressed in spermatids of seminiferous tubules at steps 4-14 (stages IV to XIV of the seminiferous epithelium classification).

Its subcellular location is the cytoplasm. The protein resides in the mitochondrion inner membrane. It is found in the cell projection. It localises to the cilium. The protein localises to the flagellum. Its subcellular location is the cytoplasmic vesicle. The protein resides in the secretory vesicle. It is found in the acrosome. Its function is as follows. Calcium-binding protein. Essential for maintaining the structural integrity of the sperm flagella. This Rattus norvegicus (Rat) protein is Calcium-binding and spermatid-specific protein 1 (Cabs1).